Reading from the N-terminus, the 236-residue chain is 2-C-methyl-D-erythritol 4-phosphate cytidylyltransferase (236 aa).

Belongs to the IspD/TarI cytidylyltransferase family. IspD subfamily.

It catalyses the reaction 2-C-methyl-D-erythritol 4-phosphate + CTP + H(+) = 4-CDP-2-C-methyl-D-erythritol + diphosphate. The protein operates within isoprenoid biosynthesis; isopentenyl diphosphate biosynthesis via DXP pathway; isopentenyl diphosphate from 1-deoxy-D-xylulose 5-phosphate: step 2/6. Its function is as follows. Catalyzes the formation of 4-diphosphocytidyl-2-C-methyl-D-erythritol from CTP and 2-C-methyl-D-erythritol 4-phosphate (MEP). The polypeptide is 2-C-methyl-D-erythritol 4-phosphate cytidylyltransferase (Burkholderia cenocepacia (strain ATCC BAA-245 / DSM 16553 / LMG 16656 / NCTC 13227 / J2315 / CF5610) (Burkholderia cepacia (strain J2315))).